Reading from the N-terminus, the 207-residue chain is Probable flagellin 2 (207 aa).

The propeptide occupies 1 to 14; it reads MRVGSRKLRRDEKG.

This sequence belongs to the archaeal flagellin family.

The protein localises to the archaeal flagellum. In terms of biological role, flagellin is the subunit protein which polymerizes to form the filaments of archaeal flagella. The sequence is that of Probable flagellin 2 (flaB2) from Archaeoglobus fulgidus (strain ATCC 49558 / DSM 4304 / JCM 9628 / NBRC 100126 / VC-16).